We begin with the raw amino-acid sequence, 123 residues long: Small ribosomal subunit protein uS12 (123 aa).

Residue Asp89 is modified to 3-methylthioaspartic acid.

Belongs to the universal ribosomal protein uS12 family. Part of the 30S ribosomal subunit. Contacts proteins S8 and S17. May interact with IF1 in the 30S initiation complex.

In terms of biological role, with S4 and S5 plays an important role in translational accuracy. Interacts with and stabilizes bases of the 16S rRNA that are involved in tRNA selection in the A site and with the mRNA backbone. Located at the interface of the 30S and 50S subunits, it traverses the body of the 30S subunit contacting proteins on the other side and probably holding the rRNA structure together. The combined cluster of proteins S8, S12 and S17 appears to hold together the shoulder and platform of the 30S subunit. In Caulobacter sp. (strain K31), this protein is Small ribosomal subunit protein uS12.